The primary structure comprises 94 residues: Cell division topological specificity factor (94 aa).

Belongs to the MinE family.

Its function is as follows. Prevents the cell division inhibition by proteins MinC and MinD at internal division sites while permitting inhibition at polar sites. This ensures cell division at the proper site by restricting the formation of a division septum at the midpoint of the long axis of the cell. This chain is Cell division topological specificity factor, found in Alkalilimnicola ehrlichii (strain ATCC BAA-1101 / DSM 17681 / MLHE-1).